Reading from the N-terminus, the 251-residue chain is UPF0309 protein SAV_3856 (251 aa).

The 185-residue stretch at 36 to 220 (IADTVADGGR…AGTLADRGIE (185 aa)) folds into the SIS domain.

It belongs to the UPF0309 family.

The protein is UPF0309 protein SAV_3856 of Streptomyces avermitilis (strain ATCC 31267 / DSM 46492 / JCM 5070 / NBRC 14893 / NCIMB 12804 / NRRL 8165 / MA-4680).